Reading from the N-terminus, the 226-residue chain is UPF0758 protein Sca_1264 (226 aa).

Residues 102-224 enclose the MPN domain; sequence KITSPQDAAD…YLSMVEGGYF (123 aa). Zn(2+) is bound by residues H173, H175, and D186. Positions 173-186 match the JAMM motif motif; it reads HNHPSGDVTPSKED.

Belongs to the UPF0758 family.

This chain is UPF0758 protein Sca_1264, found in Staphylococcus carnosus (strain TM300).